Reading from the N-terminus, the 78-residue chain is MAAHCQVTGAGPGFGHSISHSHRRTKRRFDPNIQKKTYWVPSLRRNVTLTLSAKGIKTIDVRGIDAVVADLIAKGVKL.

Residues 1–30 (MAAHCQVTGAGPGFGHSISHSHRRTKRRFD) form a disordered region.

This sequence belongs to the bacterial ribosomal protein bL28 family.

The chain is Large ribosomal subunit protein bL28 from Micrococcus luteus (strain ATCC 4698 / DSM 20030 / JCM 1464 / CCM 169 / CCUG 5858 / IAM 1056 / NBRC 3333 / NCIMB 9278 / NCTC 2665 / VKM Ac-2230) (Micrococcus lysodeikticus).